Consider the following 96-residue polypeptide: Co-chaperonin GroES (96 aa).

It belongs to the GroES chaperonin family. Heptamer of 7 subunits arranged in a ring. Interacts with the chaperonin GroEL.

It is found in the cytoplasm. Functionally, together with the chaperonin GroEL, plays an essential role in assisting protein folding. The GroEL-GroES system forms a nano-cage that allows encapsulation of the non-native substrate proteins and provides a physical environment optimized to promote and accelerate protein folding. GroES binds to the apical surface of the GroEL ring, thereby capping the opening of the GroEL channel. The sequence is that of Co-chaperonin GroES from Nitrosococcus oceani (strain ATCC 19707 / BCRC 17464 / JCM 30415 / NCIMB 11848 / C-107).